The sequence spans 363 residues: Protein-glutamate methylesterase/protein-glutamine glutaminase of group 3 operon (363 aa).

One can recognise a Response regulatory domain in the interval 7-124 (RVLIVDDSAS…RQALLECSTR (118 aa)). At D58 the chain carries 4-aspartylphosphate. A CheB-type methylesterase domain is found at 166–357 (PTTERIVCIG…REIMLWYQAG (192 aa)). Active-site residues include S177, H203, and D299.

It belongs to the CheB family. Phosphorylated by CheA. Phosphorylation of the N-terminal regulatory domain activates the methylesterase activity.

It localises to the cytoplasm. It carries out the reaction [protein]-L-glutamate 5-O-methyl ester + H2O = L-glutamyl-[protein] + methanol + H(+). It catalyses the reaction L-glutaminyl-[protein] + H2O = L-glutamyl-[protein] + NH4(+). Functionally, involved in chemotaxis. Part of a chemotaxis signal transduction system that modulates chemotaxis in response to various stimuli. Catalyzes the demethylation of specific methylglutamate residues introduced into the chemoreceptors (methyl-accepting chemotaxis proteins or MCP) by CheR. Also mediates the irreversible deamidation of specific glutamine residues to glutamic acid. The sequence is that of Protein-glutamate methylesterase/protein-glutamine glutaminase of group 3 operon from Bradyrhizobium diazoefficiens (strain JCM 10833 / BCRC 13528 / IAM 13628 / NBRC 14792 / USDA 110).